We begin with the raw amino-acid sequence, 271 residues long: 3-methyl-2-oxobutanoate hydroxymethyltransferase (271 aa).

The Mg(2+) site is built by D51 and D90. 3-methyl-2-oxobutanoate is bound by residues 51–52 (DS), D90, and K118. Position 120 (E120) interacts with Mg(2+). Catalysis depends on E186, which acts as the Proton acceptor.

It belongs to the PanB family. As to quaternary structure, homodecamer; pentamer of dimers. Mg(2+) is required as a cofactor.

The protein resides in the cytoplasm. The catalysed reaction is 3-methyl-2-oxobutanoate + (6R)-5,10-methylene-5,6,7,8-tetrahydrofolate + H2O = 2-dehydropantoate + (6S)-5,6,7,8-tetrahydrofolate. Its pathway is cofactor biosynthesis; (R)-pantothenate biosynthesis; (R)-pantoate from 3-methyl-2-oxobutanoate: step 1/2. Its function is as follows. Catalyzes the reversible reaction in which hydroxymethyl group from 5,10-methylenetetrahydrofolate is transferred onto alpha-ketoisovalerate to form ketopantoate. This Xanthomonas oryzae pv. oryzae (strain PXO99A) protein is 3-methyl-2-oxobutanoate hydroxymethyltransferase.